Consider the following 118-residue polypeptide: Phosphoribosyl-AMP cyclohydrolase (118 aa).

Aspartate 87 contributes to the Mg(2+) binding site. Cysteine 88 lines the Zn(2+) pocket. Mg(2+) contacts are provided by aspartate 89 and aspartate 91. Zn(2+) contacts are provided by cysteine 104 and cysteine 111.

It belongs to the PRA-CH family. As to quaternary structure, homodimer. It depends on Mg(2+) as a cofactor. Zn(2+) serves as cofactor.

The protein localises to the cytoplasm. It catalyses the reaction 1-(5-phospho-beta-D-ribosyl)-5'-AMP + H2O = 1-(5-phospho-beta-D-ribosyl)-5-[(5-phospho-beta-D-ribosylamino)methylideneamino]imidazole-4-carboxamide. Its pathway is amino-acid biosynthesis; L-histidine biosynthesis; L-histidine from 5-phospho-alpha-D-ribose 1-diphosphate: step 3/9. Catalyzes the hydrolysis of the adenine ring of phosphoribosyl-AMP. The sequence is that of Phosphoribosyl-AMP cyclohydrolase from Corynebacterium glutamicum (strain R).